Consider the following 414-residue polypeptide: Transforming growth factor beta-2 proprotein (414 aa).

The signal sequence occupies residues 1 to 20 (MHYCVLSTFLLLHLVPVALS). N-linked (GlcNAc...) asparagine glycosylation is found at Asn72, Asn140, and Asn241. Intrachain disulfides connect Cys309/Cys318, Cys317/Cys380, Cys346/Cys411, and Cys350/Cys413.

The protein belongs to the TGF-beta family. Interacts with the serine proteases, HTRA1 and HTRA3. Interacts with ASPN. Interacts with MFAP5. As to quaternary structure, interacts with Transforming growth factor beta-2 (TGF-beta-2) chain; interaction is non-covalent and maintains (TGF-beta-2) in a latent state. Interacts with LRRC32/GARP; leading to regulate activation of TGF-beta-2. Interacts with NREP; the interaction results in a decrease in TGFB2 autoinduction. In terms of assembly, transforming growth factor beta-2: Homodimer; disulfide-linked. Transforming growth factor beta-2: Interacts with TGF-beta receptors (TGFBR1 and TGFBR2), leading to signal transduction. The precursor proprotein is cleaved in the Golgi apparatus to form Transforming growth factor beta-2 (TGF-beta-2) and Latency-associated peptide (LAP) chains, which remain non-covalently linked, rendering TGF-beta-2 inactive.

The protein resides in the secreted. Its subcellular location is the extracellular space. It is found in the extracellular matrix. Its function is as follows. Precursor of the Latency-associated peptide (LAP) and Transforming growth factor beta-2 (TGF-beta-2) chains, which constitute the regulatory and active subunit of TGF-beta-2, respectively. In terms of biological role, required to maintain the Transforming growth factor beta-2 (TGF-beta-2) chain in a latent state during storage in extracellular matrix. Associates non-covalently with TGF-beta-2 and regulates its activation via interaction with 'milieu molecules', such as LTBP1 and LRRC32/GARP, that control activation of TGF-beta-2. Multifunctional protein that regulates various processes such as angiogenesis and heart development. Activation into mature form follows different steps: following cleavage of the proprotein in the Golgi apparatus, Latency-associated peptide (LAP) and Transforming growth factor beta-2 (TGF-beta-2) chains remain non-covalently linked rendering TGF-beta-2 inactive during storage in extracellular matrix. At the same time, LAP chain interacts with 'milieu molecules', such as LTBP1 and LRRC32/GARP, that control activation of TGF-beta-2 and maintain it in a latent state during storage in extracellular milieus. Once activated following release of LAP, TGF-beta-2 acts by binding to TGF-beta receptors (TGFBR1 and TGFBR2), which transduce signal. The sequence is that of Transforming growth factor beta-2 proprotein (Tgfb2) from Mus musculus (Mouse).